The chain runs to 483 residues: Glutamate--tRNA ligase (483 aa).

A 'HIGH' region motif is present at residues 11-21 (PSPTGLLHIGN). Residues 255-259 (KLSKR) carry the 'KMSKS' region motif. An ATP-binding site is contributed by Lys258.

This sequence belongs to the class-I aminoacyl-tRNA synthetase family. Glutamate--tRNA ligase type 1 subfamily. Monomer.

It localises to the cytoplasm. It catalyses the reaction tRNA(Glu) + L-glutamate + ATP = L-glutamyl-tRNA(Glu) + AMP + diphosphate. Catalyzes the attachment of glutamate to tRNA(Glu) in a two-step reaction: glutamate is first activated by ATP to form Glu-AMP and then transferred to the acceptor end of tRNA(Glu). This Lactococcus lactis subsp. lactis (strain IL1403) (Streptococcus lactis) protein is Glutamate--tRNA ligase.